Consider the following 94-residue polypeptide: Co-chaperonin GroES (94 aa).

This sequence belongs to the GroES chaperonin family. Heptamer of 7 subunits arranged in a ring. Interacts with the chaperonin GroEL.

The protein resides in the cytoplasm. In terms of biological role, together with the chaperonin GroEL, plays an essential role in assisting protein folding. The GroEL-GroES system forms a nano-cage that allows encapsulation of the non-native substrate proteins and provides a physical environment optimized to promote and accelerate protein folding. GroES binds to the apical surface of the GroEL ring, thereby capping the opening of the GroEL channel. The polypeptide is Co-chaperonin GroES (Exiguobacterium sibiricum (strain DSM 17290 / CCUG 55495 / CIP 109462 / JCM 13490 / 255-15)).